Consider the following 153-residue polypeptide: Pheromone-binding protein Gp-9 (153 aa).

Residues 1–19 form the signal peptide; that stretch reads MKTFVLHIFIFALVAFASA. Intrachain disulfides connect Cys-37–Cys-77, Cys-73–Cys-129, and Cys-118–Cys-138.

The protein belongs to the PBP/GOBP family. As to quaternary structure, homodimer.

It localises to the secreted. Functionally, colony queen number, a major feature of social organization, is associated with worker genotype for Gp-9. Colonies are headed by either a single reproductive queen (monogyne form) or multiple queens (polygyne form). Differences in worker Gp-9 genotypes between social forms may cause differences in workers' abilities to recognize queens and regulate their numbers. This is Pheromone-binding protein Gp-9 from Solenopsis saevissima (Fire ant).